The chain runs to 617 residues: Diacylglycerol O-acyltransferase 1 (617 aa).

Disordered regions lie at residues 1-52 and 95-186; these read MEPI…ETER and RNTN…PKQE. Residues 7–17 show a composition bias toward polar residues; it reads SNGNKNNSMDK. 2 stretches are compositionally biased toward low complexity: residues 18–34 and 96–105; these read QPQQ…QQQQ and NTNNNNQNNT. Over residues 106–140 the composition is skewed to polar residues; the sequence is SPTFSSANGKQSNLTQRKINTQIQSKQPTNNNVQP. Positions 160-177 are enriched in low complexity; the sequence is QNNNGNNNNNNNNNNNNN. Transmembrane regions (helical) follow at residues 217 to 237, 254 to 274, 306 to 326, 399 to 419, and 449 to 469; these read LLLI…HLLY, WPGV…YLIE, IIAF…ICTF, IVEA…YMLP, and YVWL…VAEI. Residues 477 to 483 carry the FYXDWWN motif motif; the sequence is FYRDWWN. A run of 3 helical transmembrane segments spans residues 520–540, 545–565, and 570–590; these read GYFM…SIPF, LWGF…KNLM, and LGNV…VLLY. H532 is a catalytic residue.

Belongs to the membrane-bound acyltransferase family. Sterol o-acyltransferase subfamily.

The protein resides in the endoplasmic reticulum membrane. It carries out the reaction an acyl-CoA + a 1,2-diacyl-sn-glycerol = a triacyl-sn-glycerol + CoA. The enzyme catalyses all-trans-retinol + an acyl-CoA = an all-trans-retinyl ester + CoA. The catalysed reaction is 2-(9Z-octadecenoyl)-glycerol + (9Z)-octadecenoyl-CoA = 1,2-di-(9Z-octadecenoyl)-sn-glycerol + CoA. It catalyses the reaction 1,2-di-(9Z-octadecenoyl)-sn-glycerol + (9Z)-octadecenoyl-CoA = 1,2,3-tri-(9Z-octadecenoyl)-glycerol + CoA. It carries out the reaction all-trans-retinol + hexadecanoyl-CoA = all-trans-retinyl hexadecanoate + CoA. The enzyme catalyses 1-O-(9Z-octadecenyl)-glycerol + (9Z)-octadecenoyl-CoA = 1-O-(9Z-octadecyl)-3-(9Z-octadecenoyl)-glycerol + CoA. The catalysed reaction is 1-O-(9Z-octadecyl)-3-(9Z-octadecenoyl)-glycerol + (9Z)-octadecenoyl-CoA = 1-O-(9Z-octadecenyl)-2,3-di-(9Z-octadecenoyl)glycerol + CoA. It catalyses the reaction 1-(9Z-octadecenoyl)-glycerol + (9Z)-octadecenoyl-CoA = 1,2-di-(9Z-octadecenoyl)-glycerol + CoA. It carries out the reaction 1,2-di-(9Z-octadecenoyl)-glycerol + (9Z)-octadecenoate + H(+) = 1,2,3-tri-(9Z-octadecenoyl)-glycerol + H2O. The enzyme catalyses 1-octadecanoyl-2-(5Z,8Z,11Z,14Z-eicosatetraenoyl)-sn-glycerol + (9Z)-octadecenoyl-CoA = 1-octadecanoyl-2-(5Z,8Z,11Z,14Z)-eicosatetraenoyl-3-(9Z)-octadecenoyl-sn-glycerol + CoA. The catalysed reaction is hexadecane-1,2-diol + 2 hexadecanoyl-CoA = 1,2-O,O-dihexadecanoyl-1,2-hexadecanediol + 2 CoA. It catalyses the reaction hexadecane-1,2-diol + hexadecanoyl-CoA = 2-hydroxyhexadecyl hexadecanoate + CoA. It carries out the reaction 2-(9Z-octadecenoyl)-glycerol + hexadecanoyl-CoA = 1-hexadecanoyl-2-(9Z-octadecenoyl)-sn-glycerol + CoA. The enzyme catalyses 1,2-di-(9Z-octadecenoyl)-sn-glycerol + hexadecanoyl-CoA = 1,2-di-(9Z)-octadecenoyl-3-hexadecanoyl-sn-glycerol + CoA. The catalysed reaction is hexadecan-1-ol + hexadecanoyl-CoA = hexadecanyl hexadecanoate + CoA. It catalyses the reaction 13-cis-retinol + hexadecanoyl-CoA = 13-cis-retinyl hexadecanoate + CoA. It carries out the reaction 1,3-di-(9Z-octadecenoyl)-glycerol + (9Z)-octadecenoyl-CoA = 1,2,3-tri-(9Z-octadecenoyl)-glycerol + CoA. The enzyme catalyses 2,3-di-(9Z)-octadecenoyl-sn-glycerol + (9Z)-octadecenoyl-CoA = 1,2,3-tri-(9Z-octadecenoyl)-glycerol + CoA. It participates in lipid metabolism; glycerolipid metabolism. In terms of biological role, catalyzes the terminal and only committed step in triacylglycerol synthesis by using diacylglycerol and fatty acyl CoA as substrates. In Dictyostelium discoideum (Social amoeba), this protein is Diacylglycerol O-acyltransferase 1 (dgat1).